Consider the following 133-residue polypeptide: Heat shock protein 15 (133 aa).

The 63-residue stretch at 9–71 (VRLDKWLWAA…DERTVIVKAI (63 aa)) folds into the S4 RNA-binding domain. A disordered region spans residues 105–133 (NALTMPHPDRRPDKKERRDLLRFKHGDSE). Over residues 111–133 (HPDRRPDKKERRDLLRFKHGDSE) the composition is skewed to basic and acidic residues.

This sequence belongs to the HSP15 family. Monomer.

Involved in the recycling of free 50S ribosomal subunits that still carry a nascent chain. Binds RNA more specifically than DNA. Binds with very high affinity to the free 50S ribosomal subunit. Does not bind it when it is part of the 70S ribosome. In Escherichia coli O157:H7, this protein is Heat shock protein 15 (hslR).